We begin with the raw amino-acid sequence, 385 residues long: Succinate--CoA ligase [ADP-forming] subunit beta (385 aa).

The 229-residue stretch at lysine 9 to glutamate 237 folds into the ATP-grasp domain. Residues lysine 45, glycine 52 to glycine 54, valine 94, and glutamate 101 contribute to the ATP site. The Mg(2+) site is built by asparagine 192 and aspartate 206. Substrate is bound by residues asparagine 257 and glycine 314 to threonine 316.

Belongs to the succinate/malate CoA ligase beta subunit family. In terms of assembly, heterotetramer of two alpha and two beta subunits. It depends on Mg(2+) as a cofactor.

The catalysed reaction is succinate + ATP + CoA = succinyl-CoA + ADP + phosphate. It carries out the reaction GTP + succinate + CoA = succinyl-CoA + GDP + phosphate. The protein operates within carbohydrate metabolism; tricarboxylic acid cycle; succinate from succinyl-CoA (ligase route): step 1/1. In terms of biological role, succinyl-CoA synthetase functions in the citric acid cycle (TCA), coupling the hydrolysis of succinyl-CoA to the synthesis of either ATP or GTP and thus represents the only step of substrate-level phosphorylation in the TCA. The beta subunit provides nucleotide specificity of the enzyme and binds the substrate succinate, while the binding sites for coenzyme A and phosphate are found in the alpha subunit. This Deinococcus deserti (strain DSM 17065 / CIP 109153 / LMG 22923 / VCD115) protein is Succinate--CoA ligase [ADP-forming] subunit beta.